A 309-amino-acid chain; its full sequence is Dicarboxylate carrier UCP2 (309 aa).

Residues 1 to 16 (MVGFKATDVPPTATVK) are Mitochondrial intermembrane-facing. Solcar repeat units follow at residues 11 to 106 (PTAT…VKQF), 114 to 203 (AGIG…IKDT), and 212 to 297 (DDLP…LKRA). Positions 16-63 (KFLGAGTAACIADLITFPLDTAKVRLQIQGERQGPMQAAASAQYRGVL) are important for interaction with long-chain fatty acids. A helical transmembrane segment spans residues 17–40 (FLGAGTAACIADLITFPLDTAKVR). Over 41 to 77 (LQIQGERQGPMQAAASAQYRGVLGTILTMVRTEGPRS) the chain is Mitochondrial matrix. The helical transmembrane segment at 78-103 (LYSGLVAGLQRQMSFASVRIGLYDSV) threads the bilayer. The Mitochondrial intermembrane portion of the chain corresponds to 104–119 (KQFYTKGSEHAGIGSR). Residues 120 to 145 (LLAGSTTGALAVAVAQPTDVVKVRFQ) form a helical membrane-spanning segment. The Mitochondrial matrix portion of the chain corresponds to 146-173 (AQARAGAGRRYQSTVEAYKTIAREEGFR). A helical membrane pass occupies residues 174–199 (GLWKGTSPNVARNAIVNCAELVTYDL). Topologically, residues 200–217 (IKDTLLKAHLMTDDLPCH) are mitochondrial intermembrane. Residues 218-242 (FTSAFGAGFCTTVIASPVDVVKTRY) traverse the membrane as a helical segment. At 243–268 (MNSALGQYSSAGHCALTMLQKEGPQA) the chain is on the mitochondrial matrix side. The chain crosses the membrane as a helical span at residues 269 to 294 (FYKGFMPSFLRLGSWNVVMFVTYEQL). The important for interaction with long-chain fatty acids stretch occupies residues 278–285 (LRLGSWNV). Over 295–309 (KRALMAARASREAPF) the chain is Mitochondrial intermembrane.

This sequence belongs to the mitochondrial carrier (TC 2.A.29) family. Homotetramer. Adopts an asymmetrical dimer of dimers functional form. Interacts with MICU1 (when methylated); leading to decrease the calcium sensitivity of MICU1.

Its subcellular location is the mitochondrion inner membrane. It catalyses the reaction L-aspartate(out) + phosphate(in) + H(+)(in) = L-aspartate(in) + phosphate(out) + H(+)(out). The enzyme catalyses oxaloacetate(out) + phosphate(in) + H(+)(in) = oxaloacetate(in) + phosphate(out) + H(+)(out). The catalysed reaction is (S)-malate(out) + phosphate(in) + H(+)(in) = (S)-malate(in) + phosphate(out) + H(+)(out). It carries out the reaction malonate(out) + phosphate(in) + H(+)(in) = malonate(in) + phosphate(out) + H(+)(out). It catalyses the reaction sulfate(out) + phosphate(in) + H(+)(in) = sulfate(in) + phosphate(out) + H(+)(out). The enzyme catalyses (S)-malate(out) = (S)-malate(in). The catalysed reaction is L-aspartate(out) = L-aspartate(in). It carries out the reaction phosphate(in) = phosphate(out). It catalyses the reaction chloride(in) = chloride(out). The enzyme catalyses H(+)(in) = H(+)(out). The catalysed reaction is a long-chain fatty acid(out) = a long-chain fatty acid(in). In terms of biological role, antiporter that exports dicarboxylate intermediates of the Krebs cycle in exchange for phosphate plus a proton across the inner membrane of mitochondria, a process driven by mitochondrial motive force with an overall impact on glycolysis, glutaminolysis and glutathione-dependent redox balance. Continuous export of oxaloacetate and related four-carbon dicarboxylates from mitochondrial matrix into the cytosol negatively regulates the oxidation of acetyl-CoA substrates via the Krebs cycle lowering the ATP/ADP ratio and reactive oxygen species (ROS) production. May mediate inducible proton entry into the mitochondrial matrix affecting ATP turnover as a protection mechanism against oxidative stress. The proton currents are most likely associated with fatty acid flipping across the inner membrane of mitochondria in a metabolic process regulated by free fatty acids and purine nucleotides. Regulates the use of glucose as a source of energy. Required for glucose-induced DRP1-dependent mitochondrial fission and neuron activation in the ventromedial nucleus of the hypothalamus (VMH). This mitochondrial adaptation mechanism modulates the VMH pool of glucose-excited neurons with an impact on systemic glucose homeostasis. Regulates ROS levels and metabolic reprogramming of macrophages during the resolution phase of inflammation. Attenuates ROS production in response to IL33 to preserve the integrity of the Krebs cycle required for persistent production of itaconate and subsequent GATA3-dependent differentiation of inflammation-resolving alternatively activated macrophages. Can unidirectionally transport anions including L-malate, L-aspartate, phosphate and chloride ions. Does not mediate adaptive thermogenesis. This Bos taurus (Bovine) protein is Dicarboxylate carrier UCP2 (UCP2).